Reading from the N-terminus, the 324-residue chain is Holliday junction branch migration complex subunit RuvB (324 aa).

A large ATPase domain (RuvB-L) region spans residues 1-168; the sequence is MEDLALRPKT…FGIVEHLEYY (168 aa). ATP contacts are provided by residues Leu6, Arg7, Gly48, Lys51, Thr52, Thr53, 115 to 117, Arg158, Tyr168, and Arg205; that span reads EDF. Residue Thr52 coordinates Mg(2+). The tract at residues 169-239 is small ATPAse domain (RuvB-S); it reads TPEELAQGVM…RALEALAALG (71 aa). The segment at 242 to 324 is head domain (RuvB-H); sequence ELGLEKRDRE…PPPVGPLLEP (83 aa). Residues Arg297 and Arg302 each contribute to the DNA site.

The protein belongs to the RuvB family. Homohexamer. Forms an RuvA(8)-RuvB(12)-Holliday junction (HJ) complex. HJ DNA is sandwiched between 2 RuvA tetramers; dsDNA enters through RuvA and exits via RuvB. An RuvB hexamer assembles on each DNA strand where it exits the tetramer. Each RuvB hexamer is contacted by two RuvA subunits (via domain III) on 2 adjacent RuvB subunits; this complex drives branch migration. In the full resolvosome a probable DNA-RuvA(4)-RuvB(12)-RuvC(2) complex forms which resolves the HJ.

The protein localises to the cytoplasm. It carries out the reaction ATP + H2O = ADP + phosphate + H(+). The ATPase activity of RuvB is enhanced by RuvA. The RuvA-RuvB-RuvC complex processes Holliday junction (HJ) DNA during genetic recombination and DNA repair, while the RuvA-RuvB complex plays an important role in the rescue of blocked DNA replication forks via replication fork reversal (RFR). RuvA specifically binds to HJ cruciform DNA, conferring on it an open structure. The RuvB hexamer acts as an ATP-dependent pump, pulling dsDNA into and through the RuvAB complex. RuvB forms 2 homohexamers on either side of HJ DNA bound by 1 or 2 RuvA tetramers; 4 subunits per hexamer contact DNA at a time. Coordinated motions by a converter formed by DNA-disengaged RuvB subunits stimulates ATP hydrolysis and nucleotide exchange. Immobilization of the converter enables RuvB to convert the ATP-contained energy into a lever motion, pulling 2 nucleotides of DNA out of the RuvA tetramer per ATP hydrolyzed, thus driving DNA branch migration. The RuvB motors rotate together with the DNA substrate, which together with the progressing nucleotide cycle form the mechanistic basis for DNA recombination by continuous HJ branch migration. Branch migration allows RuvC to scan DNA until it finds its consensus sequence, where it cleaves and resolves cruciform DNA. Its function is as follows. Has Mg(2+)-, DNA-dependent ATPase activity; dsDNA and supercoiled DNA but not ssDNA stimulate activity. Binds to linear dsDNA in the absence of ATP or ATP-gamma-S. This subunit can promote Holliday junction migration alone in vitro. Partially complements an E.coli deletion for UV sensitivity. The polypeptide is Holliday junction branch migration complex subunit RuvB (Thermus thermophilus).